A 376-amino-acid chain; its full sequence is Carbamoyl phosphate synthase small chain (376 aa).

The tract at residues 1 to 187 (MRAFLALEDG…AADGAYAWPG (187 aa)) is CPSase. L-glutamine-binding residues include Ser45, Gly239, and Gly241. Residues 191 to 376 (RLVVYDYGIK…RGMVREAVGR (186 aa)) form the Glutamine amidotransferase type-1 domain. Cys266 (nucleophile) is an active-site residue. L-glutamine is bound by residues Leu267, Gln270, Asn308, Gly310, and Phe311. Catalysis depends on residues His349 and Glu351.

This sequence belongs to the CarA family. Composed of two chains; the small (or glutamine) chain promotes the hydrolysis of glutamine to ammonia, which is used by the large (or ammonia) chain to synthesize carbamoyl phosphate. Tetramer of heterodimers (alpha,beta)4.

The enzyme catalyses hydrogencarbonate + L-glutamine + 2 ATP + H2O = carbamoyl phosphate + L-glutamate + 2 ADP + phosphate + 2 H(+). The catalysed reaction is L-glutamine + H2O = L-glutamate + NH4(+). It functions in the pathway amino-acid biosynthesis; L-arginine biosynthesis; carbamoyl phosphate from bicarbonate: step 1/1. Its pathway is pyrimidine metabolism; UMP biosynthesis via de novo pathway; (S)-dihydroorotate from bicarbonate: step 1/3. In terms of biological role, small subunit of the glutamine-dependent carbamoyl phosphate synthetase (CPSase). CPSase catalyzes the formation of carbamoyl phosphate from the ammonia moiety of glutamine, carbonate, and phosphate donated by ATP, constituting the first step of 2 biosynthetic pathways, one leading to arginine and/or urea and the other to pyrimidine nucleotides. The small subunit (glutamine amidotransferase) binds and cleaves glutamine to supply the large subunit with the substrate ammonia. The sequence is that of Carbamoyl phosphate synthase small chain from Nitratidesulfovibrio vulgaris (strain DSM 19637 / Miyazaki F) (Desulfovibrio vulgaris).